We begin with the raw amino-acid sequence, 695 residues long: L-type lectin-domain containing receptor kinase S.7 (695 aa).

An N-terminal signal peptide occupies residues 1-23 (MPPRCRRLPLLFILLLAVRPLSA). Over 24–331 (AAASSIAAAP…NHRRRHLFYK (308 aa)) the chain is Extracellular. The legume-lectin like stretch occupies residues 37 to 276 (YRRISWASNL…VERWTFRTFG (240 aa)). Residues Asn45 and Asn279 are each glycosylated (N-linked (GlcNAc...) asparagine). Over residues 286 to 320 (PTKYIGPMPPNNQPLPPPPSPSPSPPPPSPPPPPH) the composition is skewed to pro residues. The tract at residues 286–323 (PTKYIGPMPPNNQPLPPPPSPSPSPPPPSPPPPPHPNH) is disordered. Residues 332–352 (VLGGVLGGMVLLGLVVVGSAV) traverse the membrane as a helical segment. At 353 to 695 (LLGRSVRRKN…TANTAFFSCR (343 aa)) the chain is on the cytoplasmic side. A Phosphothreonine modification is found at Thr376. Residue Ser378 is modified to Phosphoserine. Phosphothreonine is present on residues Thr386 and Thr403. The region spanning 389-661 (FDSGNVIGVG…SMLDGTAPLI (273 aa)) is the Protein kinase domain. Residues 395–403 (IGVGGSGAT) and Lys418 contribute to the ATP site. Asp514 (proton acceptor) is an active-site residue. At Thr657 the chain carries Phosphothreonine.

In the N-terminal section; belongs to the leguminous lectin family. It in the C-terminal section; belongs to the protein kinase superfamily. Ser/Thr protein kinase family. Interacts with INP1. Interaction with INP1 is required for DAF1 polar localization at the future aperture sites in tetrads. Post-translationally, autophosphorylated at Thr-376; Ser-378; Thr-386; Thr-403 and Thr-657. As to expression, expressed in roots, leaves, lemma, palea, pistil and anthers.

Its subcellular location is the cell membrane. The protein localises to the cytoplasm. It localises to the cytosol. The enzyme catalyses L-seryl-[protein] + ATP = O-phospho-L-seryl-[protein] + ADP + H(+). It catalyses the reaction L-threonyl-[protein] + ATP = O-phospho-L-threonyl-[protein] + ADP + H(+). Legume-lectin receptor-like kinase required for normal pollen development and male fertility. Regulates pollen exine assembly and aperture development. Plays a critical role in annulus formation, and may participate in the formation of the fibrillar-granular layer underneath the operculum. May function by regulating the expression of genes involved in pollen exine development. Kinase activity is required for its function in pollen development. This chain is L-type lectin-domain containing receptor kinase S.7, found in Oryza sativa subsp. japonica (Rice).